A 182-amino-acid chain; its full sequence is MSNQLSPKPPVNPIVMGKIGSAYGIRGWLRVFSSTEDAESIFDYQPWFIQSKSGWQLVEIEGWKYHNQDLIIKVKGTDDRDAANLLTNCEIVVDSSQLPDLGEGDYYWKDLMGCQVVTVAGYELGKVIDMMETGSNDVMVIKANLKDAFGVKERLVPFLTEQVVKRVDLSTQTIEVDWDPGF.

In terms of domain architecture, PRC barrel spans 102–182 (GEGDYYWKDL…TIEVDWDPGF (81 aa)).

It belongs to the RimM family. Binds ribosomal protein uS19.

The protein resides in the cytoplasm. An accessory protein needed during the final step in the assembly of 30S ribosomal subunit, possibly for assembly of the head region. Essential for efficient processing of 16S rRNA. May be needed both before and after RbfA during the maturation of 16S rRNA. It has affinity for free ribosomal 30S subunits but not for 70S ribosomes. The polypeptide is Ribosome maturation factor RimM (Pectobacterium carotovorum subsp. carotovorum (strain PC1)).